The primary structure comprises 88 residues: Adenylosuccinate lyase (88 aa).

N(6)-(1,2-dicarboxyethyl)-AMP contacts are provided by residues 4–5 (RY) and 67–69 (KHD).

Belongs to the lyase 1 family. Adenylosuccinate lyase subfamily. Homotetramer and homodimer. Residues from neighboring subunits contribute catalytic and substrate-binding residues to each active site.

The enzyme catalyses N(6)-(1,2-dicarboxyethyl)-AMP = fumarate + AMP. It catalyses the reaction (2S)-2-[5-amino-1-(5-phospho-beta-D-ribosyl)imidazole-4-carboxamido]succinate = 5-amino-1-(5-phospho-beta-D-ribosyl)imidazole-4-carboxamide + fumarate. It participates in purine metabolism; AMP biosynthesis via de novo pathway; AMP from IMP: step 2/2. Its pathway is purine metabolism; IMP biosynthesis via de novo pathway; 5-amino-1-(5-phospho-D-ribosyl)imidazole-4-carboxamide from 5-amino-1-(5-phospho-D-ribosyl)imidazole-4-carboxylate: step 2/2. Its function is as follows. Catalyzes two reactions in de novo purine nucleotide biosynthesis. Catalyzes the breakdown of 5-aminoimidazole- (N-succinylocarboxamide) ribotide (SAICAR or 2-[5-amino-1-(5-phospho-beta-D-ribosyl)imidazole-4-carboxamido]succinate) to 5-aminoimidazole-4-carboxamide ribotide (AICAR or 5-amino-1-(5-phospho-beta-D-ribosyl)imidazole-4-carboxamide) and fumarate, and of adenylosuccinate (ADS or N(6)-(1,2-dicarboxyethyl)-AMP) to adenosine monophosphate (AMP) and fumarate. The polypeptide is Adenylosuccinate lyase (purB) (Spiroplasma citri).